We begin with the raw amino-acid sequence, 170 residues long: NADH-quinone oxidoreductase subunit B (170 aa).

4 residues coordinate [4Fe-4S] cluster: Cys37, Cys38, Cys102, and Cys131.

This sequence belongs to the complex I 20 kDa subunit family. In terms of assembly, NDH-1 is composed of 14 different subunits. Subunits NuoB, C, D, E, F, and G constitute the peripheral sector of the complex. It depends on [4Fe-4S] cluster as a cofactor.

It is found in the cell inner membrane. It catalyses the reaction a quinone + NADH + 5 H(+)(in) = a quinol + NAD(+) + 4 H(+)(out). NDH-1 shuttles electrons from NADH, via FMN and iron-sulfur (Fe-S) centers, to quinones in the respiratory chain. The immediate electron acceptor for the enzyme in this species is believed to be ubiquinone. Couples the redox reaction to proton translocation (for every two electrons transferred, four hydrogen ions are translocated across the cytoplasmic membrane), and thus conserves the redox energy in a proton gradient. The chain is NADH-quinone oxidoreductase subunit B from Citrifermentans bemidjiense (strain ATCC BAA-1014 / DSM 16622 / JCM 12645 / Bem) (Geobacter bemidjiensis).